The sequence spans 314 residues: Ribonucleoside-diphosphate reductase small subunit (314 aa).

Residues Asp-73, Glu-103, and His-106 each coordinate Fe cation. Tyr-110 is an active-site residue. Residues 160–180 (VLMILIEGIFFSSSFAAIAYL) traverse the membrane as a helical segment. Fe cation contacts are provided by Glu-166, Glu-200, and His-203.

Belongs to the ribonucleoside diphosphate reductase small chain family. In terms of assembly, heterotetramer composed of a homodimer of the large subunit (R1) and a homodimer of the small subunit (R2). Larger multisubunit protein complex are also active, composed of (R1)n(R2)n. The cofactor is Fe cation.

It localises to the host membrane. It carries out the reaction a 2'-deoxyribonucleoside 5'-diphosphate + [thioredoxin]-disulfide + H2O = a ribonucleoside 5'-diphosphate + [thioredoxin]-dithiol. Functionally, ribonucleoside-diphosphate reductase holoenzyme provides the precursors necessary for viral DNA synthesis. Allows virus growth in non-dividing cells, as well as reactivation from latency in infected hosts. Catalyzes the biosynthesis of deoxyribonucleotides from the corresponding ribonucleotides. In Bovine herpesvirus 1.1 (strain Cooper) (BoHV-1), this protein is Ribonucleoside-diphosphate reductase small subunit.